A 68-amino-acid chain; its full sequence is Phycobilisome 7.8 kDa linker polypeptide, allophycocyanin-associated, core (68 aa).

Positions Ser-2–Ala-57 constitute a CpcD-like domain.

Belongs to the phycobilisome linker protein family.

The protein localises to the cellular thylakoid membrane. Its function is as follows. Rod linker protein, associated with allophycocyanin. Linker polypeptides determine the state of aggregation and the location of the disk-shaped phycobiliprotein units within the phycobilisome and modulate their spectroscopic properties in order to mediate a directed and optimal energy transfer. The protein is Phycobilisome 7.8 kDa linker polypeptide, allophycocyanin-associated, core (apcC) of Nostoc sp. (strain PCC 7120 / SAG 25.82 / UTEX 2576).